Here is a 263-residue protein sequence, read N- to C-terminus: tRNA (guanine-N(1)-)-methyltransferase (263 aa).

S-adenosyl-L-methionine-binding positions include glycine 124 and 144–149 (LGDFVL).

It belongs to the RNA methyltransferase TrmD family. As to quaternary structure, homodimer.

Its subcellular location is the cytoplasm. It carries out the reaction guanosine(37) in tRNA + S-adenosyl-L-methionine = N(1)-methylguanosine(37) in tRNA + S-adenosyl-L-homocysteine + H(+). Specifically methylates guanosine-37 in various tRNAs. The sequence is that of tRNA (guanine-N(1)-)-methyltransferase from Aromatoleum aromaticum (strain DSM 19018 / LMG 30748 / EbN1) (Azoarcus sp. (strain EbN1)).